The chain runs to 152 residues: Xanthine-guanine phosphoribosyltransferase (152 aa).

5-phospho-alpha-D-ribose 1-diphosphate contacts are provided by residues 37–38 and 88–96; these read RG and DDLVDTGNT. Asp89 serves as a coordination point for Mg(2+). Guanine is bound by residues Asp92 and Ile135. Residues Asp92 and Ile135 each coordinate xanthine. GMP-binding positions include 92–96 and 134–135; these read DTGNT and WI.

The protein belongs to the purine/pyrimidine phosphoribosyltransferase family. XGPT subfamily. As to quaternary structure, homotetramer. Mg(2+) serves as cofactor.

Its subcellular location is the cell inner membrane. It carries out the reaction GMP + diphosphate = guanine + 5-phospho-alpha-D-ribose 1-diphosphate. It catalyses the reaction XMP + diphosphate = xanthine + 5-phospho-alpha-D-ribose 1-diphosphate. The enzyme catalyses IMP + diphosphate = hypoxanthine + 5-phospho-alpha-D-ribose 1-diphosphate. It functions in the pathway purine metabolism; GMP biosynthesis via salvage pathway; GMP from guanine: step 1/1. Its pathway is purine metabolism; XMP biosynthesis via salvage pathway; XMP from xanthine: step 1/1. Purine salvage pathway enzyme that catalyzes the transfer of the ribosyl-5-phosphate group from 5-phospho-alpha-D-ribose 1-diphosphate (PRPP) to the N9 position of the 6-oxopurines guanine and xanthine to form the corresponding ribonucleotides GMP (guanosine 5'-monophosphate) and XMP (xanthosine 5'-monophosphate), with the release of PPi. To a lesser extent, also acts on hypoxanthine. The chain is Xanthine-guanine phosphoribosyltransferase from Mannheimia succiniciproducens (strain KCTC 0769BP / MBEL55E).